We begin with the raw amino-acid sequence, 198 residues long: Dephospho-CoA kinase (198 aa).

The 196-residue stretch at 3 to 198 (VVGLTGGIGA…HRRYSLLAAA (196 aa)) folds into the DPCK domain. 11-16 (GAGKST) lines the ATP pocket.

It belongs to the CoaE family.

The protein localises to the cytoplasm. It carries out the reaction 3'-dephospho-CoA + ATP = ADP + CoA + H(+). It functions in the pathway cofactor biosynthesis; coenzyme A biosynthesis; CoA from (R)-pantothenate: step 5/5. In terms of biological role, catalyzes the phosphorylation of the 3'-hydroxyl group of dephosphocoenzyme A to form coenzyme A. This chain is Dephospho-CoA kinase, found in Methylococcus capsulatus (strain ATCC 33009 / NCIMB 11132 / Bath).